A 122-amino-acid polypeptide reads, in one-letter code: Phospholipase A2 crotoxin basic subunit CBb (122 aa).

7 cysteine pairs are disulfide-bonded: C26–C115, C28–C44, C43–C95, C49–C122, C50–C88, C57–C81, and C75–C86. 3 residues coordinate Ca(2+): Y27, G29, and G31. H47 is an active-site residue. D48 contributes to the Ca(2+) binding site. D89 is a catalytic residue.

The protein belongs to the phospholipase A2 family. Group II subfamily. D49 sub-subfamily. As to quaternary structure, heterodimer of one of the acidic (CA1, CA2, CA3 or CA4) and one of the basic (CBa1, CBa2, CBb, CBc or CBd) subunits; non-covalently linked. The acidic subunit is non-toxic, without enzymatic activity and comprises 3 peptides that are cross-linked by 5 disulfide bridges. The basic subunit is toxic, has phospholipase A2 activity and is composed of a single chain. Multiple variants of each subunit give different crotoxin complexes that can be subdivided into 2 classes: (1) those of high toxicity, low PLA2 activity (CBb, CBc and CBd linked with high affinity to any CA) and high stability (K(d)=4.5 nM) and (2) those of moderate toxicity, high PLA2 activity (CBa2 linked with low affinity to any CA) and low stability (K(d)=25 nM). It depends on Ca(2+) as a cofactor. Expressed by the venom gland.

It localises to the secreted. The enzyme catalyses a 1,2-diacyl-sn-glycero-3-phosphocholine + H2O = a 1-acyl-sn-glycero-3-phosphocholine + a fatty acid + H(+). In terms of biological role, heterodimer CA-CB: Crotoxin is a potent presynaptic neurotoxin that possesses phospholipase A2 (PLA2) activity and exerts a lethal action by blocking neuromuscular transmission. It consists of a non-covalent association of a basic and weakly toxic PLA2 subunit (CBa2, CBb, CBc, or CBd), with a small acidic, non-enzymatic and non-toxic subunit (CA1, CA2, CA3 or CA4). The complex acts by binding to a specific 48-kDa protein (R48) receptor located on presynaptic membranes, forming a transient ternary complex CA-CB-R48, followed by dissociation of the CA-CB complex and release of the CA subunit. At equilibrium, only the CB subunits remain associated with the specific crotoxin receptor. In addition to neurotoxicity, crotoxin has been found to exert myotoxicity, nephrotoxicity, and cardiovascular toxicity. Moreover, anti-inflammatory, immunomodulatory, anti-tumor and analgesic effects of crotoxin have also been reported. Its function is as follows. Monomer CBb: The basic subunit of crotoxin is a snake venom phospholipase A2 (PLA2) that exhibits weak neurotoxicity (10-fold less than the heterodimer) and strong anticoagulant effects by binding to factor Xa (F10) and inhibiting the prothrombinase activity. In addition, it shows the same effects described for the heterodimer and binds the nucleotide-binding domain (NBD1) of CFTR chloride channels and increases the channel current. PLA2 catalyzes the calcium-dependent hydrolysis of the 2-acyl groups in 3-sn-phosphoglycerides. This Crotalus durissus terrificus (South American rattlesnake) protein is Phospholipase A2 crotoxin basic subunit CBb.